The sequence spans 257 residues: Histidine/lysine/arginine/ornithine transport ATP-binding protein HisP (257 aa).

An ABC transporter domain is found at 6 to 252 (LNVIDLHKRY…PQSPRLQRFL (247 aa)). 6 residues coordinate ATP: Ser40, Gly41, Gly43, Lys44, Ser45, and Thr46.

Belongs to the ABC transporter superfamily. In terms of assembly, the HisPMQJ complex is composed of two ATP-binding proteins (HisP), two transmembrane proteins (HisM and HisQ) and a solute-binding protein (HisJ). The HisPMQ-ArgT complex is composed of two ATP-binding proteins (HisP), two transmembrane proteins (HisM and HisQ) and a solute-binding protein (ArgT).

It is found in the cell inner membrane. The catalysed reaction is a polar amino acid(out) + ATP + H2O = a polar amino acid(in) + ADP + phosphate + H(+). The enzyme catalyses L-histidine(out) + ATP + H2O = L-histidine(in) + ADP + phosphate + H(+). It catalyses the reaction L-lysine(out) + ATP + H2O = L-lysine(in) + ADP + phosphate + H(+). It carries out the reaction L-arginine(out) + ATP + H2O = L-arginine(in) + ADP + phosphate + H(+). The catalysed reaction is L-ornithine(out) + ATP + H2O = L-ornithine(in) + ADP + phosphate + H(+). In terms of biological role, part of the ABC transporter complex HisPMQJ involved in histidine transport. Is also part of the ABC transporter complex HisPMQ-ArgT involved in lysine/arginine/ornithine transport. Shows ATPase activity. Responsible for energy coupling to the transport system. The chain is Histidine/lysine/arginine/ornithine transport ATP-binding protein HisP from Escherichia coli (strain K12).